A 260-amino-acid chain; its full sequence is MELDDASRHGFGRMGFGCKHYRRRCRIRAPCCNDVFHCRHCHNESTKDGHELDRHAVESVICLVCDTEQPVAQVCYNCGVCMGEYFCSACKFFDDDVDREHFHCQDCGICRVGGKDNFFHCEKCGSCYSVSLRDKHCCIENSMKNNCPICYEYLFDSLRETSVLRCGHTMHLQCFHEMLKHDKFSCPICSMPIFDMDKFLRALDAEIEANMLHIDYMGKGWIVCNDCRDTTQVYARVAGHKCCHCQSHNTCRVAAPVLPA.

The segment at 11–80 (FGRMGFGCKH…VAQVCYNCGV (70 aa)) adopts a CHY-type zinc-finger fold. Residues Cys18, His20, Cys31, Cys32, Cys38, Cys41, His42, His50, Cys62, Cys65, Cys75, Cys78, Cys87, Cys90, His103, Cys104, Cys107, Cys110, His120, Cys121, Cys124, Cys127, His136, and Cys138 each contribute to the Zn(2+) site. Residues 82-146 (MGEYFCSACK…CCIENSMKNN (65 aa)) form a CTCHY-type zinc finger. The RING-type; atypical zinc finger occupies 147 to 190 (CPICYEYLFDSLRETSVLRCGHTMHLQCFHEMLKHDKFSCPICS).

As to expression, expressed in roots, leaves, nodes and panicles.

Its subcellular location is the nucleus. It is found in the cytoplasm. The catalysed reaction is S-ubiquitinyl-[E2 ubiquitin-conjugating enzyme]-L-cysteine + [acceptor protein]-L-lysine = [E2 ubiquitin-conjugating enzyme]-L-cysteine + N(6)-ubiquitinyl-[acceptor protein]-L-lysine.. It functions in the pathway protein modification; protein ubiquitination. In terms of biological role, possesses E3 ubiquitin-protein ligase activity in vitro. Possesses transactivation activity in yeast cells. May modulate abiotic stress responses by negatively regulating antioxidant enzymes-mediated reactive oxygen species (ROS) removal. This is E3 ubiquitin-protein ligase SRFP1 from Oryza sativa subsp. japonica (Rice).